The following is a 290-amino-acid chain: GTPase Era (290 aa).

An Era-type G domain is found at 2 to 144 (KVLKVGVLGP…AIILEEFKPQ (143 aa)). The interval 10-17 (GPTNAGKS) is G1. GTP is bound at residue 10 to 17 (GPTNAGKS). The G2 stretch occupies residues 36 to 40 (NTTLL). The tract at residues 58 to 61 (DVPG) is G3. 58–62 (DVPGF) serves as a coordination point for GTP. The G4 stretch occupies residues 97–100 (NKIE). A G5 region spans residues 121–123 (INK). 122-125 (NKFH) is a binding site for GTP. One can recognise a KH type-2 domain in the interval 201 to 279 (CKNEIPHIAR…FIDIFVKTEK (79 aa)).

This sequence belongs to the TRAFAC class TrmE-Era-EngA-EngB-Septin-like GTPase superfamily. Era GTPase family. In terms of assembly, monomer.

It localises to the cytoplasm. It is found in the cell membrane. Functionally, an essential GTPase that binds both GDP and GTP, with rapid nucleotide exchange. Plays a role in 16S rRNA processing and 30S ribosomal subunit biogenesis and possibly also in cell cycle regulation and energy metabolism. This chain is GTPase Era, found in Mycoplasma genitalium (strain ATCC 33530 / DSM 19775 / NCTC 10195 / G37) (Mycoplasmoides genitalium).